Here is a 129-residue protein sequence, read N- to C-terminus: Large ribosomal subunit protein uL22 (129 aa).

Belongs to the universal ribosomal protein uL22 family. As to quaternary structure, part of the 50S ribosomal subunit.

This protein binds specifically to 23S rRNA; its binding is stimulated by other ribosomal proteins, e.g. L4, L17, and L20. It is important during the early stages of 50S assembly. It makes multiple contacts with different domains of the 23S rRNA in the assembled 50S subunit and ribosome. Its function is as follows. The globular domain of the protein is located near the polypeptide exit tunnel on the outside of the subunit, while an extended beta-hairpin is found that lines the wall of the exit tunnel in the center of the 70S ribosome. This is Large ribosomal subunit protein uL22 from Mesorhizobium japonicum (strain LMG 29417 / CECT 9101 / MAFF 303099) (Mesorhizobium loti (strain MAFF 303099)).